A 264-amino-acid polypeptide reads, in one-letter code: Thymidylate synthase (264 aa).

Residue R21 participates in dUMP binding. H51 lines the (6R)-5,10-methylene-5,6,7,8-tetrahydrofolate pocket. Position 126–127 (126–127 (RR)) interacts with dUMP. Residue C146 is the Nucleophile of the active site. Residues 166–169 (RSAD), N177, and 207–209 (HLY) each bind dUMP. D169 provides a ligand contact to (6R)-5,10-methylene-5,6,7,8-tetrahydrofolate. A (6R)-5,10-methylene-5,6,7,8-tetrahydrofolate-binding site is contributed by S263.

It belongs to the thymidylate synthase family. Bacterial-type ThyA subfamily. As to quaternary structure, homodimer.

The protein localises to the cytoplasm. It catalyses the reaction dUMP + (6R)-5,10-methylene-5,6,7,8-tetrahydrofolate = 7,8-dihydrofolate + dTMP. It functions in the pathway pyrimidine metabolism; dTTP biosynthesis. Its function is as follows. Catalyzes the reductive methylation of 2'-deoxyuridine-5'-monophosphate (dUMP) to 2'-deoxythymidine-5'-monophosphate (dTMP) while utilizing 5,10-methylenetetrahydrofolate (mTHF) as the methyl donor and reductant in the reaction, yielding dihydrofolate (DHF) as a by-product. This enzymatic reaction provides an intracellular de novo source of dTMP, an essential precursor for DNA biosynthesis. This is Thymidylate synthase from Laribacter hongkongensis (strain HLHK9).